A 431-amino-acid chain; its full sequence is Histidine--tRNA ligase (431 aa).

The protein belongs to the class-II aminoacyl-tRNA synthetase family. As to quaternary structure, homodimer.

It is found in the cytoplasm. It carries out the reaction tRNA(His) + L-histidine + ATP = L-histidyl-tRNA(His) + AMP + diphosphate + H(+). This is Histidine--tRNA ligase from Levilactobacillus brevis (strain ATCC 367 / BCRC 12310 / CIP 105137 / JCM 1170 / LMG 11437 / NCIMB 947 / NCTC 947) (Lactobacillus brevis).